Reading from the N-terminus, the 687-residue chain is Fimbrin-5 (687 aa).

The region spanning 7–74 (VLVSDPWLQS…KSVLDKSYPN (68 aa)) is the EF-hand domain. Calponin-homology (CH) domains lie at 122-239 (ESEK…KIQM), 267-370 (LAPE…QHRN), 392-498 (SREE…RYTM), and 513-621 (EITD…YWSL). 2 actin-binding regions span residues 122–370 (ESEK…QHRN) and 392–621 (SREE…YWSL). A disordered region spans residues 628–687 (ESTVSEDATDDGDANSVAGEISNLSIDGASESSPTVQDQELLTKADNDEDEVDGENNKDA). Positions 649 to 667 (SNLSIDGASESSPTVQDQE) are enriched in polar residues.

Interacts with F-actin. In terms of tissue distribution, expressed in mature pollen.

The protein localises to the cytoplasm. The protein resides in the cytoskeleton. Cross-links actin filaments (F-actin) in a calcium independent manner. Induces the formation of actin bundles. Stabilizes and prevents F-actin depolymerization mediated by latrunculin B (LatB). The sequence is that of Fimbrin-5 from Arabidopsis thaliana (Mouse-ear cress).